The chain runs to 121 residues: Large ribosomal subunit protein bL20 (121 aa).

Belongs to the bacterial ribosomal protein bL20 family.

Binds directly to 23S ribosomal RNA and is necessary for the in vitro assembly process of the 50S ribosomal subunit. It is not involved in the protein synthesizing functions of that subunit. In Ruegeria pomeroyi (strain ATCC 700808 / DSM 15171 / DSS-3) (Silicibacter pomeroyi), this protein is Large ribosomal subunit protein bL20.